The sequence spans 75 residues: Exodeoxyribonuclease 7 small subunit (75 aa).

It belongs to the XseB family. As to quaternary structure, heterooligomer composed of large and small subunits.

The protein localises to the cytoplasm. It catalyses the reaction Exonucleolytic cleavage in either 5'- to 3'- or 3'- to 5'-direction to yield nucleoside 5'-phosphates.. Functionally, bidirectionally degrades single-stranded DNA into large acid-insoluble oligonucleotides, which are then degraded further into small acid-soluble oligonucleotides. This is Exodeoxyribonuclease 7 small subunit from Pelobacter propionicus (strain DSM 2379 / NBRC 103807 / OttBd1).